The following is a 185-amino-acid chain: Ribosome-recycling factor (185 aa).

This sequence belongs to the RRF family.

The protein localises to the cytoplasm. Its function is as follows. Responsible for the release of ribosomes from messenger RNA at the termination of protein biosynthesis. May increase the efficiency of translation by recycling ribosomes from one round of translation to another. The polypeptide is Ribosome-recycling factor (Wolbachia sp. subsp. Brugia malayi (strain TRS)).